Consider the following 453-residue polypeptide: Bis(5'-adenosyl)-triphosphatase ENPP4 (453 aa).

The N-terminal stretch at 1–18 (MKLLLMLLFSGLMTGCRG) is a signal peptide. Topologically, residues 19 to 407 (NSSSASPPKL…DQWCINLPEA (389 aa)) are extracellular. Residues Asp-34 and Thr-70 each coordinate Zn(2+). The active-site AMP-threonine intermediate is the Thr-70. The substrate site is built by Asn-91 and Tyr-154. Asn-166 carries N-linked (GlcNAc...) asparagine glycosylation. Zn(2+) is bound by residues Asp-189, His-193, Asp-237, and His-238. Asp-189 is a binding site for substrate. The cysteines at positions 254 and 287 are disulfide-linked. N-linked (GlcNAc...) asparagine glycosylation is present at Asn-276. His-336 serves as a coordination point for Zn(2+). The cysteines at positions 394 and 401 are disulfide-linked. Residues 408-428 (IGIVIGALLVLTTLTCLIIIM) traverse the membrane as a helical segment. Topologically, residues 429 to 453 (QNRVSGPRPFSRLQLQEDDDDPLIG) are cytoplasmic.

The protein belongs to the nucleotide pyrophosphatase/phosphodiesterase family. Zn(2+) is required as a cofactor.

It is found in the cell membrane. It carries out the reaction P(1),P(3)-bis(5'-adenosyl) triphosphate + H2O = AMP + ADP + 2 H(+). In terms of biological role, hydrolyzes extracellular Ap3A into AMP and ADP, and Ap4A into AMP and ATP. Ap3A and Ap4A are diadenosine polyphosphates thought to induce proliferation of vascular smooth muscle cells. Acts as a procoagulant, mediating platelet aggregation at the site of nascent thrombus via release of ADP from Ap3A and activation of ADP receptors. In Bos taurus (Bovine), this protein is Bis(5'-adenosyl)-triphosphatase ENPP4 (ENPP4).